The chain runs to 523 residues: 2-isopropylmalate synthase (523 aa).

Positions 5–267 (VIIFDTTLRD…HTAINHQEIW (263 aa)) constitute a Pyruvate carboxyltransferase domain. Residues Asp14, His202, His204, and Asn238 each contribute to the Mn(2+) site. The segment at 392-523 (RLDYFSVQSG…QHNENNKETV (132 aa)) is regulatory domain.

Belongs to the alpha-IPM synthase/homocitrate synthase family. LeuA type 1 subfamily. In terms of assembly, homodimer. The cofactor is Mn(2+).

The protein localises to the cytoplasm. It catalyses the reaction 3-methyl-2-oxobutanoate + acetyl-CoA + H2O = (2S)-2-isopropylmalate + CoA + H(+). It participates in amino-acid biosynthesis; L-leucine biosynthesis; L-leucine from 3-methyl-2-oxobutanoate: step 1/4. In terms of biological role, catalyzes the condensation of the acetyl group of acetyl-CoA with 3-methyl-2-oxobutanoate (2-ketoisovalerate) to form 3-carboxy-3-hydroxy-4-methylpentanoate (2-isopropylmalate). The chain is 2-isopropylmalate synthase from Escherichia coli (strain K12 / MC4100 / BW2952).